A 217-amino-acid polypeptide reads, in one-letter code: Melanocortin-2 receptor accessory protein 2A (217 aa).

Asn-8 carries N-linked (GlcNAc...) asparagine glycosylation. Residues 42–62 (IVIGFWVGLAVFVIFMFFVLT) traverse the membrane as a helical segment.

Belongs to the MRAP family. In terms of assembly, interacts with mc4r.

The protein resides in the cell membrane. It localises to the endoplasmic reticulum membrane. In terms of biological role, inhibitor of melanocortin receptor 4 (mc4r), a receptor involved in energy homeostasis. Plays a role during larval development in the control of energy homeostasis and body weight regulation by decreasing ligand-sensitivity of mc4r and mc4r-mediated generation of cAMP, leading to stimulate growth during larval development. Acts by stabilizing an inactive conformation of mc4r during embryonic development, when all the energy consumed is obtained from the yolk sac, possibly to speed the rapid maturation to the mobile free-feeding juvenile stage reached at 5 dpf. The sequence is that of Melanocortin-2 receptor accessory protein 2A (mrap2a) from Danio rerio (Zebrafish).